Consider the following 516-residue polypeptide: Bifunctional purine biosynthesis protein PurH (516 aa).

The MGS-like domain maps to 1-150 (MSDDRKQIKR…KNHPSVAVVV (150 aa)).

Belongs to the PurH family.

It carries out the reaction (6R)-10-formyltetrahydrofolate + 5-amino-1-(5-phospho-beta-D-ribosyl)imidazole-4-carboxamide = 5-formamido-1-(5-phospho-D-ribosyl)imidazole-4-carboxamide + (6S)-5,6,7,8-tetrahydrofolate. The catalysed reaction is IMP + H2O = 5-formamido-1-(5-phospho-D-ribosyl)imidazole-4-carboxamide. The protein operates within purine metabolism; IMP biosynthesis via de novo pathway; 5-formamido-1-(5-phospho-D-ribosyl)imidazole-4-carboxamide from 5-amino-1-(5-phospho-D-ribosyl)imidazole-4-carboxamide (10-formyl THF route): step 1/1. It participates in purine metabolism; IMP biosynthesis via de novo pathway; IMP from 5-formamido-1-(5-phospho-D-ribosyl)imidazole-4-carboxamide: step 1/1. The chain is Bifunctional purine biosynthesis protein PurH from Corynebacterium ammoniagenes (Brevibacterium ammoniagenes).